The primary structure comprises 812 residues: Lon protease (812 aa).

Residues 11-204 (IPVLPLRDVV…YLMAMMESEI (194 aa)) form the Lon N-terminal domain. 356–363 (GPPGVGKT) is an ATP binding site. Residues 592–773 (ENRVGQVTGL…EEEQTLSLQN (182 aa)) form the Lon proteolytic domain. Catalysis depends on residues Ser-679 and Lys-722. The segment covering 745–764 (KENPDNAKADQDRHPVKNNE) has biased composition (basic and acidic residues). The tract at residues 745–766 (KENPDNAKADQDRHPVKNNEEE) is disordered.

The protein belongs to the peptidase S16 family. In terms of assembly, homohexamer. Organized in a ring with a central cavity. ATP binding and hydrolysis do not affect the oligomeric state of the enzyme.

Its subcellular location is the cytoplasm. The catalysed reaction is Hydrolysis of proteins in presence of ATP.. With respect to regulation, contains an allosteric site (distinct from its active site), whose occupancy by an unfolded polypeptide leads to enzyme activation. ATP-dependent serine protease that mediates the selective degradation of mutant and abnormal proteins as well as certain short-lived regulatory proteins. Required for cellular homeostasis and for survival from DNA damage and developmental changes induced by stress. Degrades polypeptides processively to yield small peptide fragments that are 5 to 10 amino acids long. Binds to DNA in a double-stranded, site-specific manner. Endogenous substrates include the regulatory proteins RcsA and SulA, the transcriptional activator SoxS, and UmuD. Its overproduction specifically inhibits translation through at least two different pathways, one of them being the YoeB-YefM toxin-antitoxin system. This chain is Lon protease, found in Shigella dysenteriae serotype 1 (strain Sd197).